Here is a 207-residue protein sequence, read N- to C-terminus: Thiamine-phosphate synthase (207 aa).

4-amino-2-methyl-5-(diphosphooxymethyl)pyrimidine contacts are provided by residues 38–42 and N70; that span reads QYRNK. Mg(2+) is bound by residues D71 and D90. S109 contacts 4-amino-2-methyl-5-(diphosphooxymethyl)pyrimidine. 136–138 contributes to the 2-[(2R,5Z)-2-carboxy-4-methylthiazol-5(2H)-ylidene]ethyl phosphate binding site; sequence TAT. Residue K139 coordinates 4-amino-2-methyl-5-(diphosphooxymethyl)pyrimidine. Residues G165 and 185-186 contribute to the 2-[(2R,5Z)-2-carboxy-4-methylthiazol-5(2H)-ylidene]ethyl phosphate site; that span reads VS.

This sequence belongs to the thiamine-phosphate synthase family. Mg(2+) is required as a cofactor.

The enzyme catalyses 2-[(2R,5Z)-2-carboxy-4-methylthiazol-5(2H)-ylidene]ethyl phosphate + 4-amino-2-methyl-5-(diphosphooxymethyl)pyrimidine + 2 H(+) = thiamine phosphate + CO2 + diphosphate. The catalysed reaction is 2-(2-carboxy-4-methylthiazol-5-yl)ethyl phosphate + 4-amino-2-methyl-5-(diphosphooxymethyl)pyrimidine + 2 H(+) = thiamine phosphate + CO2 + diphosphate. It carries out the reaction 4-methyl-5-(2-phosphooxyethyl)-thiazole + 4-amino-2-methyl-5-(diphosphooxymethyl)pyrimidine + H(+) = thiamine phosphate + diphosphate. The protein operates within cofactor biosynthesis; thiamine diphosphate biosynthesis; thiamine phosphate from 4-amino-2-methyl-5-diphosphomethylpyrimidine and 4-methyl-5-(2-phosphoethyl)-thiazole: step 1/1. In terms of biological role, condenses 4-methyl-5-(beta-hydroxyethyl)thiazole monophosphate (THZ-P) and 2-methyl-4-amino-5-hydroxymethyl pyrimidine pyrophosphate (HMP-PP) to form thiamine monophosphate (TMP). The chain is Thiamine-phosphate synthase from Xanthomonas campestris pv. campestris (strain 8004).